The following is a 593-amino-acid chain: NADH-quinone oxidoreductase subunit C/D (593 aa).

The interval Met-1–Gln-184 is NADH dehydrogenase I subunit C. The tract at residues Asp-208–Arg-593 is NADH dehydrogenase I subunit D.

The protein in the N-terminal section; belongs to the complex I 30 kDa subunit family. In the C-terminal section; belongs to the complex I 49 kDa subunit family. As to quaternary structure, NDH-1 is composed of 13 different subunits. Subunits NuoB, CD, E, F, and G constitute the peripheral sector of the complex.

The protein localises to the cell inner membrane. The catalysed reaction is a quinone + NADH + 5 H(+)(in) = a quinol + NAD(+) + 4 H(+)(out). Its function is as follows. NDH-1 shuttles electrons from NADH, via FMN and iron-sulfur (Fe-S) centers, to quinones in the respiratory chain. The immediate electron acceptor for the enzyme in this species is believed to be ubiquinone. Couples the redox reaction to proton translocation (for every two electrons transferred, four hydrogen ions are translocated across the cytoplasmic membrane), and thus conserves the redox energy in a proton gradient. The sequence is that of NADH-quinone oxidoreductase subunit C/D from Pseudomonas putida (strain ATCC 700007 / DSM 6899 / JCM 31910 / BCRC 17059 / LMG 24140 / F1).